We begin with the raw amino-acid sequence, 1256 residues long: Bifunctional autolysin (1256 aa).

Residues 1–29 (MAKKFNYKLPSMVALTLVGSAVTAHQVQA) form the signal peptide. Residues 103-138 (GDTRANQSATTNNTQPVAKSTSTTAPKTNTNVTNAG) show a composition bias toward polar residues. 3 disordered regions span residues 103 to 151 (GDTR…NSEN), 172 to 214 (KTAA…KTSL), and 419 to 440 (TQST…PSTG). Low complexity-rich tracts occupy residues 172-196 (KTAA…KVTT) and 421-439 (STTT…KPST). The tract at residues 199 to 775 (ASAQPRSVAA…AVAQPKTAVK (577 aa)) is N-acetylmuramoyl-L-alanine amidase. 7 GW domains span residues 443–517 (TVAA…YNTA), 519–593 (SPVN…DTAK), 612–686 (TVSS…YNNA), 688–762 (SPVN…VPAA), 784–859 (TTQT…VQNL), 861–936 (KEVK…APTA), and 943–1017 (AAKD…KELI). The interval 776-1256 (AYTVTKPQTT…GKYFDIPQYK (481 aa)) is endo-beta-N-acetylglucosaminidase.

This sequence in the N-terminal section; belongs to the N-acetylmuramoyl-L-alanine amidase 2 family. It in the C-terminal section; belongs to the glycosyl hydrolase 73 family. Oligomer; forms a ring structure at the cell surface which is important for efficient partitioning of daughter cells after cell division. Undergoes proteolytic processing to generate the two extracellular lytic enzymes, probably at the septal region on the cell surface.

Its subcellular location is the secreted. The enzyme catalyses Hydrolyzes the link between N-acetylmuramoyl residues and L-amino acid residues in certain cell-wall glycopeptides.. It carries out the reaction an N(4)-(oligosaccharide-(1-&gt;3)-[oligosaccharide-(1-&gt;6)]-beta-D-Man-(1-&gt;4)-beta-D-GlcNAc-(1-&gt;4)-alpha-D-GlcNAc)-L-asparaginyl-[protein] + H2O = an oligosaccharide-(1-&gt;3)-[oligosaccharide-(1-&gt;6)]-beta-D-Man-(1-&gt;4)-D-GlcNAc + N(4)-(N-acetyl-beta-D-glucosaminyl)-L-asparaginyl-[protein]. Functionally, endohydrolysis of the di-N-acetylchitobiosyl unit in high-mannose glycopeptides and glycoproteins containing the -[(Man)5(GlcNAc)2]-Asn structure. One N-acetyl-D-glucosamine residue remains attached to the protein; the rest of the oligosaccharide is released intact. Cleaves the peptidoglycan connecting the daughter cells at the end of the cell division cycle, resulting in the separation of the two newly divided cells. Acts as an autolysin in penicillin-induced lysis. This is Bifunctional autolysin (atl) from Staphylococcus aureus (strain NCTC 8325 / PS 47).